Here is a 695-residue protein sequence, read N- to C-terminus: DNA ligase (695 aa).

NAD(+) is bound by residues 36 to 40, 85 to 86, and Glu-123; these read DADYD and SL. Lys-125 serves as the catalytic N6-AMP-lysine intermediate. NAD(+) contacts are provided by Arg-146, Glu-182, Lys-318, and Lys-342. 4 residues coordinate Zn(2+): Cys-436, Cys-439, Cys-454, and Cys-460. In terms of domain architecture, BRCT spans 617 to 695; that stretch reads LQSGDLAGKT…EDGLKALLSQ (79 aa).

The protein belongs to the NAD-dependent DNA ligase family. LigA subfamily. It depends on Mg(2+) as a cofactor. Mn(2+) serves as cofactor.

The catalysed reaction is NAD(+) + (deoxyribonucleotide)n-3'-hydroxyl + 5'-phospho-(deoxyribonucleotide)m = (deoxyribonucleotide)n+m + AMP + beta-nicotinamide D-nucleotide.. In terms of biological role, DNA ligase that catalyzes the formation of phosphodiester linkages between 5'-phosphoryl and 3'-hydroxyl groups in double-stranded DNA using NAD as a coenzyme and as the energy source for the reaction. It is essential for DNA replication and repair of damaged DNA. This chain is DNA ligase, found in Bordetella avium (strain 197N).